The sequence spans 141 residues: Sigma factor binding protein 2, chloroplastic (141 aa).

Over residues 1–20 the composition is skewed to polar residues; that stretch reads MDQSSSTLLINQRKSSSSPT. The disordered stretch occupies residues 1–36; sequence MDQSSSTLLINQRKSSSSPTRIPPKQKRKSTTTHKP. Residues 1 to 38 constitute a chloroplast transit peptide; that stretch reads MDQSSSTLLINQRKSSSSPTRIPPKQKRKSTTTHKPIK. Residues 13 to 29 carry the Bipartite nuclear localization signal motif; it reads RKSSSSPTRIPPKQKRK. Positions 24 to 36 are enriched in basic residues; sequence PKQKRKSTTTHKP. Positions 55 to 64 match the VQ motif; that stretch reads FRELVQELTG.

Interacts with sigma factors in chloroplast. Interacts with WRKY33 in the nucleus.

It is found in the plastid. Its subcellular location is the chloroplast. The protein localises to the nucleus. Its function is as follows. Functions as activator of WRKY33 in plant defense against necrotrophic pathogens by stimulating the DNA-binding activity of WRKY33. The chain is Sigma factor binding protein 2, chloroplastic (SIB2) from Arabidopsis thaliana (Mouse-ear cress).